Reading from the N-terminus, the 168-residue chain is Peptide deformylase (168 aa).

Positions 92 and 134 each coordinate Fe cation. Residue glutamate 135 is part of the active site. Histidine 138 contacts Fe cation.

The protein belongs to the polypeptide deformylase family. Requires Fe(2+) as cofactor.

It catalyses the reaction N-terminal N-formyl-L-methionyl-[peptide] + H2O = N-terminal L-methionyl-[peptide] + formate. Functionally, removes the formyl group from the N-terminal Met of newly synthesized proteins. Requires at least a dipeptide for an efficient rate of reaction. N-terminal L-methionine is a prerequisite for activity but the enzyme has broad specificity at other positions. The polypeptide is Peptide deformylase (Teredinibacter turnerae (strain ATCC 39867 / T7901)).